We begin with the raw amino-acid sequence, 64 residues long: MMLEPSIDSLQKRIKSKYSLVTLSARRARQLSETNQPLVEKSKSHKFVGMALEEIEAGKLYIEN.

The protein belongs to the RNA polymerase subunit omega family. In terms of assembly, the RNAP catalytic core consists of 2 alpha, 1 beta, 1 beta' and 1 omega subunit. When a sigma factor is associated with the core the holoenzyme is formed, which can initiate transcription.

It catalyses the reaction RNA(n) + a ribonucleoside 5'-triphosphate = RNA(n+1) + diphosphate. In terms of biological role, promotes RNA polymerase assembly. Latches the N- and C-terminal regions of the beta' subunit thereby facilitating its interaction with the beta and alpha subunits. In Oceanobacillus iheyensis (strain DSM 14371 / CIP 107618 / JCM 11309 / KCTC 3954 / HTE831), this protein is DNA-directed RNA polymerase subunit omega.